Here is a 456-residue protein sequence, read N- to C-terminus: Protein COBRA (456 aa).

The N-terminal stretch at 1 to 36 (MESFFSRSTSIVSKLSFLALWIVFLISSSSFTSTEA) is a signal peptide. N-linked (GlcNAc...) asparagine glycosylation is found at N45, N170, N178, N217, N242, N258, N328, N343, and N362. Residue N431 is the site of GPI-anchor amidated asparagine attachment. Residues 432 to 456 (GGSRSQFSFVAAVLLPLLVFFFFSA) constitute a propeptide, removed in mature form.

Belongs to the COBRA family. In terms of tissue distribution, expressed in roots, stems, leaves, flowers and siliques. Up-regulated in the root zone of rapid longitudinal expansion.

The protein localises to the lateral cell membrane. Functionally, involved in determining the orientation of cell expansion, probably by playing an important role in cellulose deposition. May act by recruiting cellulose synthesizing complexes to discrete positions on the cell surface. The chain is Protein COBRA (COB) from Arabidopsis thaliana (Mouse-ear cress).